A 265-amino-acid chain; its full sequence is ATP synthase subunit a (265 aa).

Helical transmembrane passes span 26-46, 88-108, 132-152, 168-188, 195-217, and 231-251; these read VHLDTLFFSLVSGVLFLFFFY, IGSLALTIFCWVFIMNAIDLI, DISATLGMSVCVFALIIFYTI, PFNHWAFIPVNFLLEAVTLLA, FRLFGNMYAGELIFVLIAVMYMA, and LIWAIFHILVITLQAFIFMML.

Belongs to the ATPase A chain family. F-type ATPases have 2 components, CF(1) - the catalytic core - and CF(0) - the membrane proton channel. CF(1) has five subunits: alpha(3), beta(3), gamma(1), delta(1), epsilon(1). CF(0) has three main subunits: a(1), b(2) and c(9-12). The alpha and beta chains form an alternating ring which encloses part of the gamma chain. CF(1) is attached to CF(0) by a central stalk formed by the gamma and epsilon chains, while a peripheral stalk is formed by the delta and b chains.

It localises to the cell inner membrane. In terms of biological role, key component of the proton channel; it plays a direct role in the translocation of protons across the membrane. This Histophilus somni (strain 2336) (Haemophilus somnus) protein is ATP synthase subunit a.